A 63-amino-acid polypeptide reads, in one-letter code: Conotoxin Vi5.1a (63 aa).

Residues 1–22 (MRCVPVFIILLLLIPSAPSADA) form the signal peptide. A propeptide spanning residues 23-50 (QPKTKDDVPLASYHDNAERTLQRLWNQR) is cleaved from the precursor. At Pro-62 the chain carries Proline amide.

It belongs to the conotoxin T superfamily. In terms of processing, contains 2 disulfide bonds that can be either 'C1-C3, C2-C4' or 'C1-C4, C2-C3', since these disulfide connectivities have been observed for conotoxins with cysteine framework V (for examples, see AC P0DQQ7 and AC P81755). Expressed by the venom duct.

It is found in the secreted. This is Conotoxin Vi5.1a from Conus virgo (Virgin cone).